A 349-amino-acid chain; its full sequence is GTPase Obg (349 aa).

The 159-residue stretch at 1-159 folds into the Obg domain; sequence MKFLDEAKVY…RWIWLRLKLI (159 aa). An OBG-type G domain is found at 160–327; that stretch reads ADAGLVGLPN…ALRALVAVIG (168 aa). GTP is bound by residues 166-173, 191-195, 212-215, 279-282, and 308-310; these read GLPNAGKS, FTTLH, DIPG, NKID, and SGV. The Mg(2+) site is built by S173 and T193.

The protein belongs to the TRAFAC class OBG-HflX-like GTPase superfamily. OBG GTPase family. Monomer. It depends on Mg(2+) as a cofactor.

The protein localises to the cytoplasm. In terms of biological role, an essential GTPase which binds GTP, GDP and possibly (p)ppGpp with moderate affinity, with high nucleotide exchange rates and a fairly low GTP hydrolysis rate. Plays a role in control of the cell cycle, stress response, ribosome biogenesis and in those bacteria that undergo differentiation, in morphogenesis control. The chain is GTPase Obg from Rhodopseudomonas palustris (strain BisA53).